Consider the following 331-residue polypeptide: UBX domain-containing protein 2B (331 aa).

Disordered regions lie at residues 1-26 (MAEG…SARD) and 38-63 (EMKC…PPLR). An N-acetylalanine modification is found at Ala2. Residues 38–48 (EMKCKSSKPDR) are compositionally biased toward basic and acidic residues. Ser56 carries the phosphoserine modification. Residue Thr59 is modified to Phosphothreonine. Ser66 is modified (phosphoserine). The 66-residue stretch at 141-206 (DVQILLRLWS…MEDHQDQEYI (66 aa)) folds into the SEP domain. Ser231, Ser234, and Ser235 each carry phosphoserine. Residues 252 to 329 (DSVPTTKIQI…DILNTVILQQ (78 aa)) form the UBX domain.

The protein belongs to the NSFL1C family. In terms of assembly, interacts with VCP. Does not bind ubiquitin. As to expression, present at high level in brain. Also present in liver, kidney, spleen, testis, lung and heart (at protein level).

The protein localises to the nucleus. It localises to the cytoplasm. It is found in the cytosol. The protein resides in the endoplasmic reticulum. Its subcellular location is the golgi apparatus. The protein localises to the cytoskeleton. It localises to the microtubule organizing center. It is found in the centrosome. Adapter protein required for Golgi and endoplasmic reticulum biogenesis. Involved in Golgi and endoplasmic reticulum maintenance during interphase and in their reassembly at the end of mitosis. The complex formed with VCP has membrane fusion activity; membrane fusion activity requires USO1-GOLGA2 tethering and BET1L. VCPIP1 is also required, but not its deubiquitinating activity. Together with NSFL1C/p47, regulates the centrosomal levels of kinase AURKA/Aurora A during mitotic progression by promoting AURKA removal from centrosomes in prophase. Also, regulates spindle orientation during mitosis. This is UBX domain-containing protein 2B (Ubxn2b) from Rattus norvegicus (Rat).